Consider the following 287-residue polypeptide: Orotidine 5'-phosphate decarboxylase (287 aa).

The active-site Proton donor is the Lys97.

Belongs to the OMP decarboxylase family. Type 2 subfamily.

The enzyme catalyses orotidine 5'-phosphate + H(+) = UMP + CO2. It participates in pyrimidine metabolism; UMP biosynthesis via de novo pathway; UMP from orotate: step 2/2. In Clostridium perfringens (strain ATCC 13124 / DSM 756 / JCM 1290 / NCIMB 6125 / NCTC 8237 / Type A), this protein is Orotidine 5'-phosphate decarboxylase.